We begin with the raw amino-acid sequence, 226 residues long: Transmembrane protein 204 (226 aa).

The Cytoplasmic segment spans residues 1 to 5 (MTVRK). Residues 6–26 (VVATAVLVALVSLVLNNAAAF) form a helical membrane-spanning segment. Topologically, residues 27-103 (TPNWVYQTLE…LQFDMMRACN (77 aa)) are extracellular. The helical transmembrane segment at 104-124 (LVATAALAAGQLTFVLGLTGL) threads the bilayer. At 125-136 (PLLSPDAQCWEE) the chain is on the cytoplasmic side. Residues 137–157 (AMAAAFQLASFVLVIGLVTFY) form a helical membrane-spanning segment. Residues 158–170 (RIGPYTSLSWSCY) are Extracellular-facing. Residues 171–191 (LNIGACLLATLAAAMLIWNVL) form a helical membrane-spanning segment. The Cytoplasmic segment spans residues 192–226 (HRREDCTAPRVIVISRSLTARFRRGLDNDYVESPC).

It localises to the cell junction. It is found in the adherens junction. The protein localises to the cell membrane. Its function is as follows. Can influence paracellular permeability. Appears to be involved in cell-cell interactions through adherens. The sequence is that of Transmembrane protein 204 (TMEM204) from Bos taurus (Bovine).